The chain runs to 360 residues: BLOC-1-related complex subunit 6 (360 aa).

The interval Met1–Thr201 is disordered. Residues Ala23–Pro33 show a composition bias toward polar residues. Thr41 is subject to Phosphothreonine. Position 130 is a phosphoserine (Ser130). The span at Glu144–Ala155 shows a compositional bias: acidic residues. The residue at position 173 (Ser173) is a Phosphoserine. The segment covering Gly179–Arg198 has biased composition (gly residues). Phosphothreonine is present on Thr201. Ser204 carries the phosphoserine modification.

It belongs to the BORCS6 family. In terms of assembly, component of the BLOC-one-related complex (BORC) which is composed of BLOC1S1, BLOC1S2, BORCS5, BORCS6, BORCS7, BORCS8, KXD1 and SNAPIN.

It is found in the lysosome membrane. In terms of biological role, as part of the BORC complex may play a role in lysosomes movement and localization at the cell periphery. Associated with the cytosolic face of lysosomes, the BORC complex may recruit ARL8B and couple lysosomes to microtubule plus-end-directed kinesin motor. This chain is BLOC-1-related complex subunit 6, found in Mus musculus (Mouse).